The chain runs to 428 residues: Histone deacetylase 3 (428 aa).

The interval 3–316 (KTVAYFYDPD…WTYETSLLVD (314 aa)) is histone deacetylase. 3 residues coordinate 1D-myo-inositol 1,4,5,6-tetrakisphosphate: H17, G21, and K25. H135 is a catalytic residue. Positions 170, 172, and 259 each coordinate Zn(2+). Residue R265 participates in 1D-myo-inositol 1,4,5,6-tetrakisphosphate binding. A disordered region spans residues 385–428 (LSYDRTDEPDPEERGSEENYSRPEAANEFYDGDHDNDKESDVEI). 2 stretches are compositionally biased toward basic and acidic residues: residues 386–405 (SYDR…ENYS) and 415–428 (DGDH…DVEI).

It belongs to the histone deacetylase family. HD type 1 subfamily.

The protein resides in the nucleus. It is found in the chromosome. The protein localises to the cytoplasm. Its subcellular location is the cytosol. It carries out the reaction N(6)-acetyl-L-lysyl-[histone] + H2O = L-lysyl-[histone] + acetate. The catalysed reaction is N(6)-acetyl-L-lysyl-[protein] + H2O = L-lysyl-[protein] + acetate. It catalyses the reaction N(6)-(2E)-butenoyl-L-lysyl-[protein] + H2O = (2E)-2-butenoate + L-lysyl-[protein]. The enzyme catalyses N(6)-(2-hydroxyisobutanoyl)-L-lysyl-[protein] + H2O = 2-hydroxy-2-methylpropanoate + L-lysyl-[protein]. It carries out the reaction N(6)-[(S)-lactoyl]-L-lysyl-[protein] + H2O = (S)-lactate + L-lysyl-[protein]. Inositol tetraphosphate (1D-myo-inositol 1,4,5,6-tetrakisphosphate) promotes the histone deacetylase activity by acting as an intermolecular glue between HDAC3 and N-Cor repressor complex components. Functionally, histone deacetylase that catalyzes the deacetylation of lysine residues on the N-terminal part of the core histones (H2A, H2B, H3 and H4), and some other non-histone substrates. Histone deacetylation gives a tag for epigenetic repression and plays an important role in transcriptional regulation, cell cycle progression and developmental events. Histone deacetylases act via the formation of large multiprotein complexes, such as N-Cor repressor complex, which activate the histone deacetylase activity. Participates in the BCL6 transcriptional repressor activity by deacetylating the H3 'Lys-27' (H3K27) on enhancer elements, antagonizing EP300 acetyltransferase activity and repressing proximal gene expression. Also functions as a deacetylase for non-histone targets. In addition to protein deacetylase activity, also acts as a protein-lysine deacylase by recognizing other acyl groups: catalyzes removal of (2E)-butenoyl (crotonyl), lactoyl (lactyl) and 2-hydroxyisobutanoyl (2-hydroxyisobutyryl) acyl groups from lysine residues, leading to protein decrotonylation, delactylation and de-2-hydroxyisobutyrylation, respectively. The sequence is that of Histone deacetylase 3 (HDAC3) from Gallus gallus (Chicken).